We begin with the raw amino-acid sequence, 292 residues long: NADH-cytochrome b5 reductase 1 (292 aa).

The helical transmembrane segment at 12–32 threads the bilayer; the sequence is ALLVVGTAIFAVLVGAKFLGG. An FAD-binding FR-type domain is found at 43–148; it reads TEFQNFVLKE…RGPKGAMVYT (106 aa). Residues 128 to 143 and 154 to 191 contribute to the FAD site; these read TTLKIGDNMKVRGPKG and HIGMIAGGTGITPMLQIIKAIIRNRPRNGGNDTTQVDL.

This sequence belongs to the flavoprotein pyridine nucleotide cytochrome reductase family. Monomer. Component of the 2-(3-amino-3-carboxypropyl)histidine synthase complex composed of dph1, dph2, dph3 and a NADH-dependent reductase, predominantly cbr1. The cofactor is FAD.

The protein resides in the mitochondrion outer membrane. The catalysed reaction is 2 Fe(III)-[cytochrome b5] + NADH = 2 Fe(II)-[cytochrome b5] + NAD(+) + H(+). The enzyme catalyses 2 Fe(3+)-[Dph3] + NADH = 2 Fe(2+)-[Dph3] + NAD(+) + H(+). It participates in protein modification; peptidyl-diphthamide biosynthesis. In terms of biological role, NADH-dependent reductase for dph3 and cytochrome b5. Required for the first step of diphthamide biosynthesis, a post-translational modification of histidine which occurs in elongation factor 2. Dph1 and dph2 transfer a 3-amino-3-carboxypropyl (ACP) group from S-adenosyl-L-methionine (SAM) to a histidine residue, the reaction is assisted by a reduction system comprising dph3 and a NADH-dependent reductase, predominantly cbr1. By reducing dph3, also involved in the formation of the tRNA wobble base modification mcm5s 2U (5-methoxycarbonylmethyl-2-thiouridine), mediated by the elongator complex. The cytochrome b5/NADH cytochrome b5 reductase electron transfer system supports the catalytic activity of several sterol biosynthetic enzymes. The polypeptide is NADH-cytochrome b5 reductase 1 (cbr1) (Aspergillus oryzae (strain ATCC 42149 / RIB 40) (Yellow koji mold)).